The sequence spans 353 residues: MWVMSQVRSMEPDLTLAAVYQAAANLTEQDKEIFAEAVKTAFSVCSSAAPSARLRMIETPTQNFMFVTSVIPSGVTSGEKKTKLNIDAALDNLALSFANKKSKKMARTYLLQNVLRTQDQQVAISGKYILYTKKHIETSLMIDKTKLVKKILEYAETPNLLGYTDVRDLECLLWLVFCGPKSFCQSDSCFGYSKTGYNAAFPNLLPPYLYECGQNNGLFFGIVQAYVFSWYSDFDFSALEISERARRRIRSLLYDLKQKFAEQEVSVLSVASQMCIFCALYKQNKLSLEYVSGDLKTSVFSPIIIKDCLCAQTTISTTQMLPGTKSSAIFPVYDLRKLLGALVISEGSVKFDI.

Belongs to the herpesviridae UL95 family.

The sequence is that of Protein U67 (U67) from Human herpesvirus 6A (strain Uganda-1102) (HHV-6 variant A).